The sequence spans 390 residues: Acetylornithine aminotransferase (390 aa).

Residues 103-104 (GT) and Phe-129 each bind pyridoxal 5'-phosphate. N(2)-acetyl-L-ornithine is bound at residue Arg-132. Residue 214–217 (DEVQ) participates in pyridoxal 5'-phosphate binding. Lys-243 is subject to N6-(pyridoxal phosphate)lysine. A N(2)-acetyl-L-ornithine-binding site is contributed by Ser-271. Thr-272 contacts pyridoxal 5'-phosphate. Residue Lys-304 forms an Isoglutamyl lysine isopeptide (Lys-Gln) (interchain with Q-Cter in protein Pup) linkage.

The protein belongs to the class-III pyridoxal-phosphate-dependent aminotransferase family. ArgD subfamily. In terms of assembly, homodimer. It depends on pyridoxal 5'-phosphate as a cofactor.

The protein resides in the cytoplasm. The enzyme catalyses N(2)-acetyl-L-ornithine + 2-oxoglutarate = N-acetyl-L-glutamate 5-semialdehyde + L-glutamate. Its pathway is amino-acid biosynthesis; L-arginine biosynthesis; N(2)-acetyl-L-ornithine from L-glutamate: step 4/4. The sequence is that of Acetylornithine aminotransferase from Mycolicibacterium smegmatis (strain ATCC 700084 / mc(2)155) (Mycobacterium smegmatis).